Consider the following 276-residue polypeptide: NADPH-dependent 7-cyano-7-deazaguanine reductase (276 aa).

83–85 (IES) provides a ligand contact to substrate. 85-86 (SK) serves as a coordination point for NADPH. Residue C184 is the Thioimide intermediate of the active site. The active-site Proton donor is the D191. Residue 223 to 224 (HE) participates in substrate binding. 252-253 (RG) provides a ligand contact to NADPH.

It belongs to the GTP cyclohydrolase I family. QueF type 2 subfamily. As to quaternary structure, homodimer.

It is found in the cytoplasm. The enzyme catalyses 7-aminomethyl-7-carbaguanine + 2 NADP(+) = 7-cyano-7-deazaguanine + 2 NADPH + 3 H(+). The protein operates within tRNA modification; tRNA-queuosine biosynthesis. Catalyzes the NADPH-dependent reduction of 7-cyano-7-deazaguanine (preQ0) to 7-aminomethyl-7-deazaguanine (preQ1). The chain is NADPH-dependent 7-cyano-7-deazaguanine reductase from Pseudomonas entomophila (strain L48).